A 260-amino-acid chain; its full sequence is Small ribosomal subunit protein uS2 (260 aa).

Positions 224-260 are disordered; the sequence is GRQGQDAGEDSAEKTFADTADGEGDFEESSNNENQEA. A compositionally biased stretch (acidic residues) spans 243 to 260; sequence ADGEGDFEESSNNENQEA.

Belongs to the universal ribosomal protein uS2 family.

This is Small ribosomal subunit protein uS2 from Oenococcus oeni (strain ATCC BAA-331 / PSU-1).